The sequence spans 176 residues: Inner membrane-spanning protein YciB (176 aa).

5 helical membrane-spanning segments follow: residues Ile-22 to Leu-42, Val-50 to Asn-70, Ile-81 to Ile-101, Ile-121 to Leu-141, and Phe-149 to Ile-169.

It belongs to the YciB family.

The protein localises to the cell inner membrane. Plays a role in cell envelope biogenesis, maintenance of cell envelope integrity and membrane homeostasis. This Sodalis glossinidius (strain morsitans) protein is Inner membrane-spanning protein YciB.